The sequence spans 95 residues: 6 kDa early secretory antigenic target (95 aa).

2 consecutive transmembrane segments (helical) span residues 11-43 and 49-85; these read IEAAASAIQGNVTSIHSLLDEGKQSLTKLAAAW and EAYQGVQQKWDATATELNNALQNLARTISEAGQAMAS. Residues 56–87 are a coiled coil; it reads QKWDATATELNNALQNLARTISEAGQAMASTE.

This sequence belongs to the WXG100 family. ESAT-6 subfamily. In terms of assembly, forms a tight 1:1 complex with EsxB (CFP-10).

It is found in the secreted. The protein localises to the host membrane. Its function is as follows. A secreted protein. Acts as a strong host T-cell antigen. Plays a number of roles in modulating the host's immune response to infection as well as being responsible for bacterial escape into the host cytoplasm. The sequence is that of 6 kDa early secretory antigenic target (esxA) from Mycobacterium bovis (strain ATCC BAA-935 / AF2122/97).